A 492-amino-acid polypeptide reads, in one-letter code: Trigger factor (492 aa).

The PPIase FKBP-type domain occupies 169 to 254 (GDRVSIDYVG…VKEVSKPGEL (86 aa)). The tract at residues 441–492 (LMADDEDAETTTKAKPAKKAAAKKAEAKANEDEAEEPKKKAAPKKKAAKDAE) is disordered. A compositionally biased stretch (basic and acidic residues) spans 463 to 479 (KKAEAKANEDEAEEPKK). Basic residues predominate over residues 480-492 (KAAPKKKAAKDAE).

Belongs to the FKBP-type PPIase family. Tig subfamily.

The protein resides in the cytoplasm. It catalyses the reaction [protein]-peptidylproline (omega=180) = [protein]-peptidylproline (omega=0). Functionally, involved in protein export. Acts as a chaperone by maintaining the newly synthesized protein in an open conformation. Functions as a peptidyl-prolyl cis-trans isomerase. In Mesorhizobium japonicum (strain LMG 29417 / CECT 9101 / MAFF 303099) (Mesorhizobium loti (strain MAFF 303099)), this protein is Trigger factor.